A 463-amino-acid polypeptide reads, in one-letter code: MSLSLWQQCLARLQDELPATEFSMWIRPLQAELSDNTLALYAPNRFVLDWVRDKYINNINGLLNDFCGSDAPVLRFEVGSKPIVPVAVSSAASSGASVPPAAVRASSLARPSWERVTAQPELSYRSNVNPKHTFDNFVEGKSNQLARAAARQVADNPGGAYNPLFLYGGTGLGKTHLLHAVGNGIMARKPNAKVVYMHSERFVQDMVKALQNNAIEEFKRYYRSVDALLIDDIQFFANKERSQEEFFHTFNALLEGNQQIILTSDRYPKEINGVEDRLKSRFGWGLTVAIEPPELETRVAILMKKADENDIRLPGEVAFFIAKRLRSNVRELEGALNRVIANANFTGRAITIDFVREALRDLLALQEKLVTIDNIQKTVAEYYKIKVADLLSKRRSRSVARPRQMAMALAKELTNHSLPEIGDAFGGRDHTTVLHACRKIEQLREESHDIKEDFSNLIRTLSS.

A domain I, interacts with DnaA modulators region spans residues 1 to 83 (MSLSLWQQCL…LRFEVGSKPI (83 aa)). The segment at 83–126 (IVPVAVSSAASSGASVPPAAVRASSLARPSWERVTAQPELSYRS) is domain II. The domain III, AAA+ region stretch occupies residues 127–343 (NVNPKHTFDN…GALNRVIANA (217 aa)). Residues Gly-171, Gly-173, Lys-174, and Thr-175 each coordinate ATP. The tract at residues 344–463 (NFTGRAITID…FSNLIRTLSS (120 aa)) is domain IV, binds dsDNA.

This sequence belongs to the DnaA family. In terms of assembly, oligomerizes as a right-handed, spiral filament on DNA at oriC.

Its subcellular location is the cytoplasm. In terms of biological role, plays an essential role in the initiation and regulation of chromosomal replication. ATP-DnaA binds to the origin of replication (oriC) to initiate formation of the DNA replication initiation complex once per cell cycle. Binds the DnaA box (a 9 base pair repeat at the origin) and separates the double-stranded (ds)DNA. Forms a right-handed helical filament on oriC DNA; dsDNA binds to the exterior of the filament while single-stranded (ss)DNA is stabiized in the filament's interior. The ATP-DnaA-oriC complex binds and stabilizes one strand of the AT-rich DNA unwinding element (DUE), permitting loading of DNA polymerase. After initiation quickly degrades to an ADP-DnaA complex that is not apt for DNA replication. Binds acidic phospholipids. The polypeptide is Chromosomal replication initiator protein DnaA (Edwardsiella ictaluri (strain 93-146)).